Consider the following 440-residue polypeptide: Cytochrome c biogenesis protein Ccs1 (440 aa).

3 helical membrane-spanning segments follow: residues 19 to 39 (LRLA…GTFI), 78 to 98 (NIWF…CTYT), and 164 to 184 (VGPI…ACGA).

This sequence belongs to the Ccs1/CcsB family. As to quaternary structure, may interact with CcsA.

Its subcellular location is the plastid. It is found in the chloroplast thylakoid membrane. Its function is as follows. Required during biogenesis of c-type cytochromes (cytochrome c6 and cytochrome f) at the step of heme attachment. In Emiliania huxleyi (Coccolithophore), this protein is Cytochrome c biogenesis protein Ccs1.